A 193-amino-acid polypeptide reads, in one-letter code: Acyl carrier protein phosphodiesterase (193 aa).

The protein belongs to the AcpH family.

The enzyme catalyses holo-[ACP] + H2O = apo-[ACP] + (R)-4'-phosphopantetheine + H(+). Converts holo-ACP to apo-ACP by hydrolytic cleavage of the phosphopantetheine prosthetic group from ACP. The protein is Acyl carrier protein phosphodiesterase of Escherichia coli O7:K1 (strain IAI39 / ExPEC).